The primary structure comprises 405 residues: NADH-quinone oxidoreductase subunit D (405 aa).

This sequence belongs to the complex I 49 kDa subunit family. As to quaternary structure, NDH-1 is composed of 14 different subunits. Subunits NuoB, C, D, E, F, and G constitute the peripheral sector of the complex.

The protein localises to the cell inner membrane. The enzyme catalyses a quinone + NADH + 5 H(+)(in) = a quinol + NAD(+) + 4 H(+)(out). Functionally, NDH-1 shuttles electrons from NADH, via FMN and iron-sulfur (Fe-S) centers, to quinones in the respiratory chain. The immediate electron acceptor for the enzyme in this species is believed to be ubiquinone. Couples the redox reaction to proton translocation (for every two electrons transferred, four hydrogen ions are translocated across the cytoplasmic membrane), and thus conserves the redox energy in a proton gradient. The protein is NADH-quinone oxidoreductase subunit D of Leptospira borgpetersenii serovar Hardjo-bovis (strain L550).